The sequence spans 154 residues: 6,7-dimethyl-8-ribityllumazine synthase (154 aa).

5-amino-6-(D-ribitylamino)uracil-binding positions include F26, 60 to 62 (ALE), and 84 to 86 (CII). 89 to 90 (ET) is a (2S)-2-hydroxy-3-oxobutyl phosphate binding site. The active-site Proton donor is H92. N117 contacts 5-amino-6-(D-ribitylamino)uracil. R131 contributes to the (2S)-2-hydroxy-3-oxobutyl phosphate binding site.

Belongs to the DMRL synthase family.

It carries out the reaction (2S)-2-hydroxy-3-oxobutyl phosphate + 5-amino-6-(D-ribitylamino)uracil = 6,7-dimethyl-8-(1-D-ribityl)lumazine + phosphate + 2 H2O + H(+). It functions in the pathway cofactor biosynthesis; riboflavin biosynthesis; riboflavin from 2-hydroxy-3-oxobutyl phosphate and 5-amino-6-(D-ribitylamino)uracil: step 1/2. Its function is as follows. Catalyzes the formation of 6,7-dimethyl-8-ribityllumazine by condensation of 5-amino-6-(D-ribitylamino)uracil with 3,4-dihydroxy-2-butanone 4-phosphate. This is the penultimate step in the biosynthesis of riboflavin. The protein is 6,7-dimethyl-8-ribityllumazine synthase of Polaromonas sp. (strain JS666 / ATCC BAA-500).